The chain runs to 62 residues: Large ribosomal subunit protein uL29 (62 aa).

The protein belongs to the universal ribosomal protein uL29 family.

This Geobacter sulfurreducens (strain ATCC 51573 / DSM 12127 / PCA) protein is Large ribosomal subunit protein uL29.